Here is a 398-residue protein sequence, read N- to C-terminus: S-adenosylmethionine synthase (398 aa).

Histidine 19 contacts ATP. Position 21 (aspartate 21) interacts with Mg(2+). Position 47 (glutamate 47) interacts with K(+). Residues glutamate 60 and glutamine 103 each contribute to the L-methionine site. The tract at residues 103–113 is flexible loop; sequence QSPDIAQGVDV. ATP contacts are provided by residues 177–179, 243–244, aspartate 252, 258–259, alanine 275, and lysine 279; these read DGK, RF, and RK. Residue aspartate 252 participates in L-methionine binding. Residue lysine 283 coordinates L-methionine.

It belongs to the AdoMet synthase family. Homotetramer; dimer of dimers. It depends on Mg(2+) as a cofactor. K(+) serves as cofactor.

The protein resides in the cytoplasm. It catalyses the reaction L-methionine + ATP + H2O = S-adenosyl-L-methionine + phosphate + diphosphate. The protein operates within amino-acid biosynthesis; S-adenosyl-L-methionine biosynthesis; S-adenosyl-L-methionine from L-methionine: step 1/1. Its function is as follows. Catalyzes the formation of S-adenosylmethionine (AdoMet) from methionine and ATP. The overall synthetic reaction is composed of two sequential steps, AdoMet formation and the subsequent tripolyphosphate hydrolysis which occurs prior to release of AdoMet from the enzyme. The polypeptide is S-adenosylmethionine synthase (Symbiobacterium thermophilum (strain DSM 24528 / JCM 14929 / IAM 14863 / T)).